The following is a 214-amino-acid chain: LexA repressor (214 aa).

The H-T-H motif DNA-binding region spans Val-26 to Lys-46. Residues Ser-138 and Lys-175 each act as for autocatalytic cleavage activity in the active site.

It belongs to the peptidase S24 family. In terms of assembly, homodimer.

It carries out the reaction Hydrolysis of Ala-|-Gly bond in repressor LexA.. In terms of biological role, represses a number of genes involved in the response to DNA damage (SOS response), including recA and lexA. In the presence of single-stranded DNA, RecA interacts with LexA causing an autocatalytic cleavage which disrupts the DNA-binding part of LexA, leading to derepression of the SOS regulon and eventually DNA repair. This chain is LexA repressor, found in Desulforamulus reducens (strain ATCC BAA-1160 / DSM 100696 / MI-1) (Desulfotomaculum reducens).